The sequence spans 209 residues: Orotate phosphoribosyltransferase (209 aa).

5-phospho-alpha-D-ribose 1-diphosphate contacts are provided by residues Arg-96, Lys-100, His-102, and 122-130 (EDLISTGGS). Ser-126 serves as a coordination point for orotate.

The protein belongs to the purine/pyrimidine phosphoribosyltransferase family. PyrE subfamily. Homodimer. The cofactor is Mg(2+).

It catalyses the reaction orotidine 5'-phosphate + diphosphate = orotate + 5-phospho-alpha-D-ribose 1-diphosphate. The protein operates within pyrimidine metabolism; UMP biosynthesis via de novo pathway; UMP from orotate: step 1/2. Its function is as follows. Catalyzes the transfer of a ribosyl phosphate group from 5-phosphoribose 1-diphosphate to orotate, leading to the formation of orotidine monophosphate (OMP). The sequence is that of Orotate phosphoribosyltransferase from Streptococcus sanguinis (strain SK36).